A 387-amino-acid chain; its full sequence is Patatin group D-3 (387 aa).

Positions 1-23 (MATTKSFLILIVMILATTSSTFA) are cleaved as a signal peptide. The region spanning 32–230 (LSIDGGGIKG…TVADPALLSI (199 aa)) is the PNPLA domain. Residues 36–41 (GGGIKG) carry the GXGXXG motif. Positions 75-79 (GTSTG) match the GXSXG motif. Ser-77 acts as the Nucleophile in catalysis. Asn-115 carries an N-linked (GlcNAc...) asparagine glycan. The active-site Proton acceptor is the Asp-216. The DGA/G motif lies at 216–218 (DGA). Residues 361-385 (ETYEEALKRFAKLLSDRKKLRANKA) are a coiled coil.

The protein belongs to the patatin family. In terms of tissue distribution, tuber.

The protein localises to the vacuole. Probable lipolytic acyl hydrolase (LAH), an activity which is thought to be involved in the response of tubers to pathogens. This is Patatin group D-3 from Solanum tuberosum (Potato).